Reading from the N-terminus, the 424-residue chain is Enolase (424 aa).

Gln-163 lines the (2R)-2-phosphoglycerate pocket. The Proton donor role is filled by Glu-205. 3 residues coordinate Mg(2+): Asp-242, Glu-285, and Asp-312. Lys-337, Arg-366, Ser-367, and Lys-388 together coordinate (2R)-2-phosphoglycerate. Lys-337 functions as the Proton acceptor in the catalytic mechanism.

Belongs to the enolase family. It depends on Mg(2+) as a cofactor.

The protein localises to the cytoplasm. It localises to the secreted. The protein resides in the cell surface. It catalyses the reaction (2R)-2-phosphoglycerate = phosphoenolpyruvate + H2O. Its pathway is carbohydrate degradation; glycolysis; pyruvate from D-glyceraldehyde 3-phosphate: step 4/5. Functionally, catalyzes the reversible conversion of 2-phosphoglycerate (2-PG) into phosphoenolpyruvate (PEP). It is essential for the degradation of carbohydrates via glycolysis. This is Enolase from Dinoroseobacter shibae (strain DSM 16493 / NCIMB 14021 / DFL 12).